A 455-amino-acid chain; its full sequence is Protein indeterminate-domain 7 (455 aa).

A disordered region spans residues 1-52 (MMMNRDILFHQQQQQQMEENMSNLTSASGDQASVSSGNRTETSGSNINQHHQ). Polar residues predominate over residues 17 to 49 (MEENMSNLTSASGDQASVSSGNRTETSGSNINQ). Ser-82 is subject to Phosphoserine. 2 C2H2-type zinc fingers span residues 92 to 114 (FICEVCNKGFQRDQNLQLHKRGH) and 134 to 164 (YVCPEPGCVHHHPSRALGDLTGIKKHFFRKH). Positions 156–163 (IKKHFFRK) match the Nuclear localization signal motif. The segment at 169–192 (WKCEKCSKKYAVQSDWKAHAKTCG) adopts a C2H2-type 2; degenerate zinc-finger fold. Zn(2+) is bound by residues Cys-171, Cys-174, His-187, Cys-191, Cys-198, Cys-200, His-213, and Cys-217. Residues 196 to 219 (YKCDCGTLFSRRDSFITHRAFCDA) form a CCHC-type 2; atypical zinc finger. The SHR-binding stretch occupies residues 206–218 (RRDSFITHRAFCD). The segment at 235–351 (QASNSPHHHH…PEEEERSSRS (117 aa)) is disordered. 2 stretches are compositionally biased toward low complexity: residues 248–265 (QQNIGFSSSSQNIISNSN) and 288–299 (SSNPNPNGNNGN).

Its subcellular location is the nucleus. Its function is as follows. Probable transcription factor. This is Protein indeterminate-domain 7 from Arabidopsis thaliana (Mouse-ear cress).